A 134-amino-acid chain; its full sequence is MILACDVGLKRIGIAVLLNGVILPLEAILRHNRNQASRDLNDLLREKNIQVLVVGKPNESYADTNARIEHFIKLLDFKGEIVFINEDRSSIEAYENLGHLGKKNKRLAIKDGRLDSLSACGILERYCQQVLKNR.

The protein belongs to the YqgF nuclease family.

The protein resides in the cytoplasm. Its function is as follows. Could be a nuclease involved in processing of the 5'-end of pre-16S rRNA. This is Putative pre-16S rRNA nuclease from Helicobacter pylori (strain Shi470).